Here is a 388-residue protein sequence, read N- to C-terminus: Tryptophan synthase beta chain 1 (388 aa).

An N6-(pyridoxal phosphate)lysine modification is found at lysine 82.

This sequence belongs to the TrpB family. As to quaternary structure, tetramer of two alpha and two beta chains. Requires pyridoxal 5'-phosphate as cofactor.

The enzyme catalyses (1S,2R)-1-C-(indol-3-yl)glycerol 3-phosphate + L-serine = D-glyceraldehyde 3-phosphate + L-tryptophan + H2O. Its pathway is amino-acid biosynthesis; L-tryptophan biosynthesis; L-tryptophan from chorismate: step 5/5. Its function is as follows. The beta subunit is responsible for the synthesis of L-tryptophan from indole and L-serine. In Pyrococcus abyssi (strain GE5 / Orsay), this protein is Tryptophan synthase beta chain 1 (trpB1).